A 167-amino-acid chain; its full sequence is Crossover junction endodeoxyribonuclease RuvC (167 aa).

Catalysis depends on residues aspartate 7, glutamate 67, and aspartate 140. Mg(2+) is bound by residues aspartate 7, glutamate 67, and aspartate 140.

It belongs to the RuvC family. In terms of assembly, homodimer which binds Holliday junction (HJ) DNA. The HJ becomes 2-fold symmetrical on binding to RuvC with unstacked arms; it has a different conformation from HJ DNA in complex with RuvA. In the full resolvosome a probable DNA-RuvA(4)-RuvB(12)-RuvC(2) complex forms which resolves the HJ. Mg(2+) is required as a cofactor.

The protein localises to the cytoplasm. It carries out the reaction Endonucleolytic cleavage at a junction such as a reciprocal single-stranded crossover between two homologous DNA duplexes (Holliday junction).. In terms of biological role, the RuvA-RuvB-RuvC complex processes Holliday junction (HJ) DNA during genetic recombination and DNA repair. Endonuclease that resolves HJ intermediates. Cleaves cruciform DNA by making single-stranded nicks across the HJ at symmetrical positions within the homologous arms, yielding a 5'-phosphate and a 3'-hydroxyl group; requires a central core of homology in the junction. The consensus cleavage sequence is 5'-(A/T)TT(C/G)-3'. Cleavage occurs on the 3'-side of the TT dinucleotide at the point of strand exchange. HJ branch migration catalyzed by RuvA-RuvB allows RuvC to scan DNA until it finds its consensus sequence, where it cleaves and resolves the cruciform DNA. This chain is Crossover junction endodeoxyribonuclease RuvC, found in Moorella thermoacetica (strain ATCC 39073 / JCM 9320).